The following is a 338-amino-acid chain: UDP-glucose 4-epimerase (338 aa).

Residues 11–12 (FI), 31–36 (DNLCNS), 58–59 (DI), 80–84 (FAGLK), N99, S124, Y149, K153, and F178 each bind NAD(+). Residues S124 and Y149 each contribute to the substrate site. The Proton acceptor role is filled by Y149. Substrate is bound by residues N179, 199-200 (NL), 216-218 (SVF), R231, and 292-295 (RAGD).

The protein belongs to the NAD(P)-dependent epimerase/dehydratase family. As to quaternary structure, homodimer. NAD(+) serves as cofactor.

The catalysed reaction is UDP-alpha-D-glucose = UDP-alpha-D-galactose. It functions in the pathway carbohydrate metabolism; galactose metabolism. Involved in the metabolism of galactose. Plays an essential role in the incorporation of galactose into meningococcal lipopolysaccharide surface molecules, which are important for pathogenesis. Catalyzes the conversion of UDP-galactose (UDP-Gal) to UDP-glucose (UDP-Glc) through a mechanism involving the transient reduction of NAD. The polypeptide is UDP-glucose 4-epimerase (galE) (Neisseria gonorrhoeae).